A 455-amino-acid polypeptide reads, in one-letter code: Chromosomal replication initiator protein DnaA (455 aa).

A domain I, interacts with DnaA modulators region spans residues Met-1–Arg-75. Residues Arg-75 to Thr-117 form a domain II region. Positions Arg-84 to Ser-93 are enriched in basic and acidic residues. Residues Arg-84–Thr-107 are disordered. Positions Lys-118–Ser-334 are domain III, AAA+ region. Positions 162, 164, 165, and 166 each coordinate ATP. Positions Arg-335 to Ser-455 are domain IV, binds dsDNA.

Belongs to the DnaA family. Oligomerizes as a right-handed, spiral filament on DNA at oriC.

The protein localises to the cytoplasm. Its function is as follows. Plays an essential role in the initiation and regulation of chromosomal replication. ATP-DnaA binds to the origin of replication (oriC) to initiate formation of the DNA replication initiation complex once per cell cycle. Binds the DnaA box (a 9 base pair repeat at the origin) and separates the double-stranded (ds)DNA. Forms a right-handed helical filament on oriC DNA; dsDNA binds to the exterior of the filament while single-stranded (ss)DNA is stabiized in the filament's interior. The ATP-DnaA-oriC complex binds and stabilizes one strand of the AT-rich DNA unwinding element (DUE), permitting loading of DNA polymerase. After initiation quickly degrades to an ADP-DnaA complex that is not apt for DNA replication. Binds acidic phospholipids. This chain is Chromosomal replication initiator protein DnaA, found in Lactiplantibacillus plantarum (strain ATCC BAA-793 / NCIMB 8826 / WCFS1) (Lactobacillus plantarum).